The primary structure comprises 370 residues: Queuine tRNA-ribosyltransferase (370 aa).

Asp-89 functions as the Proton acceptor in the catalytic mechanism. Substrate-binding positions include 89-93 (DSGGF), Asp-143, Gln-185, and Gly-212. Residues 243-249 (GVGKPED) form an RNA binding region. Asp-262 serves as the catalytic Nucleophile. Residues 267–271 (TRNAR) form an RNA binding; important for wobble base 34 recognition region. Zn(2+)-binding residues include Cys-300, Cys-302, Cys-305, and His-331.

The protein belongs to the queuine tRNA-ribosyltransferase family. In terms of assembly, homodimer. Within each dimer, one monomer is responsible for RNA recognition and catalysis, while the other monomer binds to the replacement base PreQ1. It depends on Zn(2+) as a cofactor.

It catalyses the reaction 7-aminomethyl-7-carbaguanine + guanosine(34) in tRNA = 7-aminomethyl-7-carbaguanosine(34) in tRNA + guanine. It participates in tRNA modification; tRNA-queuosine biosynthesis. Its function is as follows. Catalyzes the base-exchange of a guanine (G) residue with the queuine precursor 7-aminomethyl-7-deazaguanine (PreQ1) at position 34 (anticodon wobble position) in tRNAs with GU(N) anticodons (tRNA-Asp, -Asn, -His and -Tyr). Catalysis occurs through a double-displacement mechanism. The nucleophile active site attacks the C1' of nucleotide 34 to detach the guanine base from the RNA, forming a covalent enzyme-RNA intermediate. The proton acceptor active site deprotonates the incoming PreQ1, allowing a nucleophilic attack on the C1' of the ribose to form the product. After dissociation, two additional enzymatic reactions on the tRNA convert PreQ1 to queuine (Q), resulting in the hypermodified nucleoside queuosine (7-(((4,5-cis-dihydroxy-2-cyclopenten-1-yl)amino)methyl)-7-deazaguanosine). This chain is Queuine tRNA-ribosyltransferase, found in Hydrogenovibrio crunogenus (strain DSM 25203 / XCL-2) (Thiomicrospira crunogena).